Reading from the N-terminus, the 186-residue chain is Centromere protein M (186 aa).

It localises to the nucleus. The protein localises to the chromosome. It is found in the centromere. Functionally, probable component of a centromeric complex involved in assembly of kinetochore proteins, mitotic progression and chromosome segregation. This Danio rerio (Zebrafish) protein is Centromere protein M (cenpm).